The primary structure comprises 205 residues: Protein-L-isoaspartate O-methyltransferase (205 aa).

The active site involves S56.

Belongs to the methyltransferase superfamily. L-isoaspartyl/D-aspartyl protein methyltransferase family.

The protein localises to the cytoplasm. The enzyme catalyses [protein]-L-isoaspartate + S-adenosyl-L-methionine = [protein]-L-isoaspartate alpha-methyl ester + S-adenosyl-L-homocysteine. In terms of biological role, catalyzes the methyl esterification of L-isoaspartyl residues in peptides and proteins that result from spontaneous decomposition of normal L-aspartyl and L-asparaginyl residues. It plays a role in the repair and/or degradation of damaged proteins. This is Protein-L-isoaspartate O-methyltransferase from Aeromonas salmonicida (strain A449).